A 481-amino-acid chain; its full sequence is uncharacterized protein (481 aa).

The tract at residues 1-28 (MPQSNHYSHQSRSHNDRRRQQPDEKVQA) is disordered. One can recognise a TRAM domain in the interval 29-87 (TVNIGQRFPLTIRRLGINGEGIGYYKHVITFVKGALPEEVVVAEVTAVHPRYLEAKIRS). 4 residues coordinate S-adenosyl-L-methionine: glutamine 313, tyrosine 342, aspartate 363, and aspartate 411. Cysteine 438 functions as the Nucleophile in the catalytic mechanism.

This sequence belongs to the class I-like SAM-binding methyltransferase superfamily. RNA M5U methyltransferase family.

This is an uncharacterized protein from Lactiplantibacillus plantarum (strain ATCC BAA-793 / NCIMB 8826 / WCFS1) (Lactobacillus plantarum).